The chain runs to 114 residues: Iron-sulfur cluster insertion protein ErpA (114 aa).

3 residues coordinate iron-sulfur cluster: Cys42, Cys106, and Cys108.

The protein belongs to the HesB/IscA family. Homodimer. Requires iron-sulfur cluster as cofactor.

Required for insertion of 4Fe-4S clusters for at least IspG. The protein is Iron-sulfur cluster insertion protein ErpA of Serratia proteamaculans (strain 568).